Here is a 157-residue protein sequence, read N- to C-terminus: Putative 4-hydroxy-4-methyl-2-oxoglutarate aldolase (157 aa).

Substrate contacts are provided by residues 78-81 (GDVI) and R100. D101 contributes to the a divalent metal cation binding site.

This sequence belongs to the class II aldolase/RraA-like family. In terms of assembly, homotrimer. The cofactor is a divalent metal cation.

The catalysed reaction is 4-hydroxy-4-methyl-2-oxoglutarate = 2 pyruvate. It carries out the reaction oxaloacetate + H(+) = pyruvate + CO2. Catalyzes the aldol cleavage of 4-hydroxy-4-methyl-2-oxoglutarate (HMG) into 2 molecules of pyruvate. Also contains a secondary oxaloacetate (OAA) decarboxylase activity due to the common pyruvate enolate transition state formed following C-C bond cleavage in the retro-aldol and decarboxylation reactions. This is Putative 4-hydroxy-4-methyl-2-oxoglutarate aldolase from Mycobacterium leprae (strain Br4923).